Consider the following 222-residue polypeptide: Deoxyribose-phosphate aldolase (222 aa).

D92 acts as the Proton donor/acceptor in catalysis. Catalysis depends on K156, which acts as the Schiff-base intermediate with acetaldehyde. K185 functions as the Proton donor/acceptor in the catalytic mechanism.

Belongs to the DeoC/FbaB aldolase family. DeoC type 1 subfamily. Homodimer.

It localises to the cytoplasm. The enzyme catalyses 2-deoxy-D-ribose 5-phosphate = D-glyceraldehyde 3-phosphate + acetaldehyde. It functions in the pathway carbohydrate degradation; 2-deoxy-D-ribose 1-phosphate degradation; D-glyceraldehyde 3-phosphate and acetaldehyde from 2-deoxy-alpha-D-ribose 1-phosphate: step 2/2. Its activity is regulated as follows. Shows high stability to high concentrations of acetaldehyde. Catalyzes a reversible aldol reaction between acetaldehyde and D-glyceraldehyde 3-phosphate to generate 2-deoxy-D-ribose 5-phosphate. This chain is Deoxyribose-phosphate aldolase, found in Aciduliprofundum boonei (strain DSM 19572 / T469).